The sequence spans 477 residues: Aspartyl/glutamyl-tRNA(Asn/Gln) amidotransferase subunit B (477 aa).

The protein belongs to the GatB/GatE family. GatB subfamily. Heterotrimer of A, B and C subunits.

The catalysed reaction is L-glutamyl-tRNA(Gln) + L-glutamine + ATP + H2O = L-glutaminyl-tRNA(Gln) + L-glutamate + ADP + phosphate + H(+). It carries out the reaction L-aspartyl-tRNA(Asn) + L-glutamine + ATP + H2O = L-asparaginyl-tRNA(Asn) + L-glutamate + ADP + phosphate + 2 H(+). Its function is as follows. Allows the formation of correctly charged Asn-tRNA(Asn) or Gln-tRNA(Gln) through the transamidation of misacylated Asp-tRNA(Asn) or Glu-tRNA(Gln) in organisms which lack either or both of asparaginyl-tRNA or glutaminyl-tRNA synthetases. The reaction takes place in the presence of glutamine and ATP through an activated phospho-Asp-tRNA(Asn) or phospho-Glu-tRNA(Gln). The sequence is that of Aspartyl/glutamyl-tRNA(Asn/Gln) amidotransferase subunit B from Legionella pneumophila subsp. pneumophila (strain Philadelphia 1 / ATCC 33152 / DSM 7513).